The following is a 430-amino-acid chain: Adenylosuccinate synthetase (430 aa).

GTP contacts are provided by residues 13–19 (GDEGKGK) and 41–43 (GHT). The active-site Proton acceptor is the Asp-14. Mg(2+) contacts are provided by Asp-14 and Gly-41. Residues 14-17 (DEGK), 39-42 (NAGH), Thr-130, Arg-144, Gln-225, Thr-240, and Arg-304 contribute to the IMP site. Catalysis depends on His-42, which acts as the Proton donor. 300–306 (ATTGRAR) lines the substrate pocket. GTP-binding positions include Arg-306, 332–334 (KLD), and 414–416 (STG).

It belongs to the adenylosuccinate synthetase family. Homodimer. Mg(2+) serves as cofactor.

It is found in the cytoplasm. The enzyme catalyses IMP + L-aspartate + GTP = N(6)-(1,2-dicarboxyethyl)-AMP + GDP + phosphate + 2 H(+). It participates in purine metabolism; AMP biosynthesis via de novo pathway; AMP from IMP: step 1/2. Its function is as follows. Plays an important role in the de novo pathway of purine nucleotide biosynthesis. Catalyzes the first committed step in the biosynthesis of AMP from IMP. This Pseudomonas fluorescens (strain ATCC BAA-477 / NRRL B-23932 / Pf-5) protein is Adenylosuccinate synthetase.